A 301-amino-acid chain; its full sequence is Probable alpha-L-glutamate ligase (301 aa).

In terms of domain architecture, ATP-grasp spans 104–287 (LQLLSRRGVG…IASQIIAFIE (184 aa)). ATP contacts are provided by residues Lys141, 178–179 (EF), Asp187, and 211–213 (RSN). Mg(2+)-binding residues include Asp248, Glu260, and Asn262. Mn(2+)-binding residues include Asp248, Glu260, and Asn262.

It belongs to the RimK family. Requires Mg(2+) as cofactor. Mn(2+) serves as cofactor.

The protein is Probable alpha-L-glutamate ligase of Hydrogenovibrio crunogenus (strain DSM 25203 / XCL-2) (Thiomicrospira crunogena).